Consider the following 275-residue polypeptide: MALVKVKPTSAGRRGMVKVVSPKLHKGAPHAALLEKKTRGSGRNNNGHITVRHRGGGHKQHYRVVDFRRNKDGIPAKVERLEYDPNRTAHIALLCYADGERRYIIAPRGLEVGATLISGIEAPIRAGNTLPIRNIPVGTTIHCIEMIPGKGAQMARSAGASAVLMAREGTYAQVRLRSGEVRRVHIQCRATIGEVGNEEHSLRQIGKAGAMRWRGVRPTVRGVAMNPIDHPHGGGEGRTGEAREPVSPWGTPAKGFKTRRNKRTNNMIVQRRKRK.

2 disordered regions span residues 38–59 (TRGS…GGHK) and 223–275 (VAMN…RKRK). The segment covering 50–59 (TVRHRGGGHK) has biased composition (basic residues). Basic and acidic residues predominate over residues 229 to 244 (DHPHGGGEGRTGEARE).

This sequence belongs to the universal ribosomal protein uL2 family. Part of the 50S ribosomal subunit. Forms a bridge to the 30S subunit in the 70S ribosome.

One of the primary rRNA binding proteins. Required for association of the 30S and 50S subunits to form the 70S ribosome, for tRNA binding and peptide bond formation. It has been suggested to have peptidyltransferase activity; this is somewhat controversial. Makes several contacts with the 16S rRNA in the 70S ribosome. The sequence is that of Large ribosomal subunit protein uL2 from Bordetella bronchiseptica (strain ATCC BAA-588 / NCTC 13252 / RB50) (Alcaligenes bronchisepticus).